Here is a 1016-residue protein sequence, read N- to C-terminus: KN motif and ankyrin repeat domain-containing protein 4 (1016 aa).

Disordered regions lie at residues 1–26 (MEKI…YPYS), 70–91 (PRNF…QQNW), 235–259 (AEPE…AVQS), 401–485 (LSQE…LPRG), 506–563 (EEGS…SPQD), and 622–755 (AQAP…VSHL). 2 stretches are compositionally biased toward polar residues: residues 70–80 (PRNFSLPNSGD) and 246–258 (SHLS…SAVQ). The stretch at 346–409 (SSLKNQVLAL…KLSQERASEA (64 aa)) forms a coiled coil. Composition is skewed to basic and acidic residues over residues 401-414 (LSQE…DRTD) and 445-454 (PECRAPRAEK). Residues 460–469 (VQNNHKQSYP) show a composition bias toward polar residues. A compositionally biased stretch (pro residues) spans 632 to 650 (TPAPPPSTPPPPPPPPPEI). Position 639 is a phosphothreonine (Thr639). Over residues 695–708 (TSGEDSSPEDLSDS) the composition is skewed to acidic residues. Composition is skewed to basic and acidic residues over residues 709 to 727 (ETEK…DLHP) and 745 to 755 (TSDRGEEVSHL). ANK repeat units follow at residues 838-868 (SGNT…NVDH), 877-905 (VMIT…NVNI), 910-939 (GGQT…DVNL), 943-973 (DGSS…NSSL), and 977-1007 (AGRT…PGRS).

It localises to the cytoplasm. Functionally, may be involved in the control of cytoskeleton formation by regulating actin polymerization. The sequence is that of KN motif and ankyrin repeat domain-containing protein 4 (Kank4) from Mus musculus (Mouse).